Consider the following 286-residue polypeptide: Release factor glutamine methyltransferase (286 aa).

Residues 122-126 (GTGTG), Asp145, Trp173, and Asn188 each bind S-adenosyl-L-methionine. 188–191 (NPPY) lines the substrate pocket.

It belongs to the protein N5-glutamine methyltransferase family. PrmC subfamily.

The enzyme catalyses L-glutaminyl-[peptide chain release factor] + S-adenosyl-L-methionine = N(5)-methyl-L-glutaminyl-[peptide chain release factor] + S-adenosyl-L-homocysteine + H(+). In terms of biological role, methylates the class 1 translation termination release factors RF1/PrfA and RF2/PrfB on the glutamine residue of the universally conserved GGQ motif. The sequence is that of Release factor glutamine methyltransferase from Shewanella oneidensis (strain ATCC 700550 / JCM 31522 / CIP 106686 / LMG 19005 / NCIMB 14063 / MR-1).